Reading from the N-terminus, the 273-residue chain is DnaJ homolog subfamily C member 27 (273 aa).

A required for interaction with MAPK1 region spans residues 1-18 (MEANMPKRKEPGRSLRIK). Residues 23-30 (GNAEVGKS), 71-75 (DMAGH), and 134-137 (NKID) contribute to the GTP site. Residues 217–273 (DSWDMLGVKPGASRDEVNKAYRKLAVLLHPDKCVAPGSEDAFKAVVNARTALLKNIK) enclose the J domain.

It belongs to the small GTPase superfamily. Rab family. Interacts directly with MAPK1 (wild-type and kinase-deficient forms). Interacts directly (in GTP-bound form) with MAP2K1 (wild-type and kinase-deficient forms). As to expression, overexpressed in gastrointestinal cancers; expression correlates with later tumor-node-metastasis stages of colorectal cancers.

It is found in the nucleus. Functionally, GTPase which can activate the MEK/ERK pathway and induce cell transformation when overexpressed. May act as a nuclear scaffold for MAPK1, probably by association with MAPK1 nuclear export signal leading to enhanced ERK1/ERK2 signaling. The polypeptide is DnaJ homolog subfamily C member 27 (DNAJC27) (Homo sapiens (Human)).